The chain runs to 143 residues: Heat shock protein 16 (143 aa).

Residues 30 to 143 form the sHSP domain; it reads QIPGELSPSI…SQTKKQIAIK (114 aa).

This sequence belongs to the small heat shock protein (HSP20) family.

It localises to the cytoplasm. The protein resides in the nucleus. The polypeptide is Heat shock protein 16 (hsp16) (Schizosaccharomyces pombe (strain 972 / ATCC 24843) (Fission yeast)).